We begin with the raw amino-acid sequence, 583 residues long: Aspartyl protease APCB1 (583 aa).

The helical transmembrane segment at 83 to 103 (LVLGLLGISLLAVAFYASVFP) threads the bilayer. The region spanning 203–564 (YYTRILVGKP…DNVKRRIGWM (362 aa)) is the Peptidase A1 domain. Catalysis depends on residues D223 and D431.

It belongs to the peptidase A1 family. In terms of assembly, interacts with BAG6 and BAGP1.

Its subcellular location is the membrane. In terms of biological role, involved in proteolytic processing of BAG6 and plant basal immunity. The sequence is that of Aspartyl protease APCB1 from Arabidopsis thaliana (Mouse-ear cress).